A 291-amino-acid polypeptide reads, in one-letter code: MKRNDPCWCGSQKKWKHCHYPTKPERPSDNLRQLYASRYDIIIKTPDQIEKIRKACQVTARILDALCKAAKEGVTTNELDQLSCNLHKQYNAIPAPLNYGQPPFPKTICTSLNEVICHGIPNDTPLQNGDIMNIDVSCIVDGFYGDCSRMVMIGEVPEIKKKVCEASLEALNAAIAILEPNLPLYEIGEVIENCAARYGFSVVDQFVGHGVGVRFHENPYVAHHRNSCKIPLAPGMTFTIEPMINVGKKEGFIDPTNHWEARTCDHQPSAQWEHTVLITDSGYEILTLLDN.

Position 118 (H118) interacts with substrate. D135, D146, and H209 together coordinate a divalent metal cation. H216 is a substrate binding site. 2 residues coordinate a divalent metal cation: E241 and E273.

It belongs to the peptidase M24A family. Methionine aminopeptidase type 1 subfamily. In terms of assembly, monomer. It depends on Co(2+) as a cofactor. Zn(2+) is required as a cofactor. Requires Mn(2+) as cofactor. Fe(2+) serves as cofactor.

The catalysed reaction is Release of N-terminal amino acids, preferentially methionine, from peptides and arylamides.. Functionally, removes the N-terminal methionine from nascent proteins. The N-terminal methionine is often cleaved when the second residue in the primary sequence is small and uncharged (Met-Ala-, Cys, Gly, Pro, Ser, Thr, or Val). Requires deformylation of the N(alpha)-formylated initiator methionine before it can be hydrolyzed. The chain is Methionine aminopeptidase from Chlamydia muridarum (strain MoPn / Nigg).